Reading from the N-terminus, the 340-residue chain is Ferredoxin--NADP reductase (340 aa).

Residues aspartate 33, glutamine 41, tyrosine 46, alanine 86, phenylalanine 120, aspartate 286, and threonine 327 each contribute to the FAD site.

Belongs to the ferredoxin--NADP reductase type 2 family. As to quaternary structure, homodimer. Requires FAD as cofactor.

The enzyme catalyses 2 reduced [2Fe-2S]-[ferredoxin] + NADP(+) + H(+) = 2 oxidized [2Fe-2S]-[ferredoxin] + NADPH. The protein is Ferredoxin--NADP reductase of Rickettsia conorii (strain ATCC VR-613 / Malish 7).